Here is an 843-residue protein sequence, read N- to C-terminus: DNA-directed RNA polymerase subunit beta' (843 aa).

Zn(2+)-binding residues include cysteine 70, cysteine 72, cysteine 85, and cysteine 88. Mg(2+) is bound by residues aspartate 686, aspartate 688, and aspartate 690.

It belongs to the RNA polymerase beta' chain family. RpoC1 subfamily. In plastids the minimal PEP RNA polymerase catalytic core is composed of four subunits: alpha, beta, beta', and beta''. When a (nuclear-encoded) sigma factor is associated with the core the holoenzyme is formed, which can initiate transcription. Mg(2+) serves as cofactor. Zn(2+) is required as a cofactor.

The protein resides in the plastid. It is found in the chloroplast. The enzyme catalyses RNA(n) + a ribonucleoside 5'-triphosphate = RNA(n+1) + diphosphate. Functionally, DNA-dependent RNA polymerase catalyzes the transcription of DNA into RNA using the four ribonucleoside triphosphates as substrates. The sequence is that of DNA-directed RNA polymerase subunit beta' from Trieres chinensis (Marine centric diatom).